The following is a 129-amino-acid chain: MAFQFPDHFRFADTHEYASLDGDLVRVGISAFAVDQLGDIVFVDLPEVGDLLNRGTTFGSVESVKAVEDLHAPISGELVRINESVLSSPDELQNDPHGEGWLLVVRPADPAQLQDLMDAATYANKVAVE.

The region spanning 24–106 (LVRVGISAFA…HGEGWLLVVR (83 aa)) is the Lipoyl-binding domain. K65 is subject to N6-lipoyllysine.

It belongs to the GcvH family. In terms of assembly, the glycine cleavage system is composed of four proteins: P, T, L and H. It depends on (R)-lipoate as a cofactor.

Functionally, the glycine cleavage system catalyzes the degradation of glycine. The H protein shuttles the methylamine group of glycine from the P protein to the T protein. In Prochlorococcus marinus (strain MIT 9303), this protein is Glycine cleavage system H protein.